The following is a 190-amino-acid chain: NAD(P)H-quinone oxidoreductase subunit I (190 aa).

4Fe-4S ferredoxin-type domains are found at residues 55–84 (GRIH…VDWT) and 95–124 (KHYS…MTEE). Positions 64, 67, 70, 74, 104, 107, 110, and 114 each coordinate [4Fe-4S] cluster. The tract at residues 169-190 (IEPHDLPAGSQRAGKRPEEITD) is disordered.

Belongs to the complex I 23 kDa subunit family. As to quaternary structure, NDH-1 is composed of at least 11 different subunits. [4Fe-4S] cluster is required as a cofactor.

It localises to the cellular thylakoid membrane. It catalyses the reaction a plastoquinone + NADH + (n+1) H(+)(in) = a plastoquinol + NAD(+) + n H(+)(out). The enzyme catalyses a plastoquinone + NADPH + (n+1) H(+)(in) = a plastoquinol + NADP(+) + n H(+)(out). In terms of biological role, NDH-1 shuttles electrons from an unknown electron donor, via FMN and iron-sulfur (Fe-S) centers, to quinones in the respiratory and/or the photosynthetic chain. The immediate electron acceptor for the enzyme in this species is believed to be plastoquinone. Couples the redox reaction to proton translocation, and thus conserves the redox energy in a proton gradient. The protein is NAD(P)H-quinone oxidoreductase subunit I of Microcystis aeruginosa (strain NIES-843 / IAM M-2473).